The chain runs to 199 residues: Phosphatidylethanolamine N-methyltransferase (199 aa).

Over methionine 1–aspartate 12 the chain is Lumenal. The helical intramembrane region spans proline 13–alanine 33. Topologically, residues arginine 34–alanine 45 are lumenal. Residues phenylalanine 46 to leucine 66 traverse the membrane as a helical segment. Residues arginine 67–glycine 93 are Cytoplasmic-facing. A helical transmembrane segment spans residues leucine 94–alanine 114. Glycine 98–glycine 100 serves as a coordination point for S-adenosyl-L-methionine. Over glycine 115–histidine 157 the chain is Lumenal. The helical transmembrane segment at alanine 158–leucine 178 threads the bilayer. Topologically, residues tyrosine 179–serine 199 are cytoplasmic. Position 180-181 (glutamate 180–glutamate 181) interacts with S-adenosyl-L-methionine.

Belongs to the class VI-like SAM-binding methyltransferase superfamily. PEMT/PEM2 methyltransferase family. Isoform 2 is N-glycosylated with high-mannose oligosaccharides. Primarily expressed in liver (at protein level).

The protein localises to the endoplasmic reticulum. It is found in the endoplasmic reticulum membrane. It localises to the mitochondrion membrane. It catalyses the reaction a 1,2-diacyl-sn-glycero-3-phospho-N-methylethanolamine + S-adenosyl-L-methionine = a 1,2-diacyl-sn-glycero-3-phospho-N,N-dimethylethanolamine + S-adenosyl-L-homocysteine + H(+). The catalysed reaction is a 1,2-diacyl-sn-glycero-3-phospho-N,N-dimethylethanolamine + S-adenosyl-L-methionine = a 1,2-diacyl-sn-glycero-3-phosphocholine + S-adenosyl-L-homocysteine + H(+). It carries out the reaction a 1,2-diacyl-sn-glycero-3-phosphoethanolamine + S-adenosyl-L-methionine = a 1,2-diacyl-sn-glycero-3-phospho-N-methylethanolamine + S-adenosyl-L-homocysteine + H(+). The enzyme catalyses 1,2-di-(9Z-octadecenoyl)-sn-glycero-3-phosphoethanolamine + S-adenosyl-L-methionine = 1,2-di-(9Z-octadecenoyl)-sn-glycero-3-phospho-N-methylethanolamine + S-adenosyl-L-homocysteine + H(+). It catalyses the reaction 1,2-di-(9Z-octadecenoyl)-sn-glycero-3-phospho-N-methylethanolamine + S-adenosyl-L-methionine = 1,2-di-(9Z-octadecenoyl)-sn-glycero-3-phospho-N,N-dimethylethanolamine + S-adenosyl-L-homocysteine + H(+). The catalysed reaction is 1,2-di-(9Z-octadecenoyl)-sn-glycero-3-phospho-N,N-dimethylethanolamine + S-adenosyl-L-methionine = 1,2-di-(9Z-octadecenoyl)-sn-glycero-3-phosphocholine + S-adenosyl-L-homocysteine + H(+). It carries out the reaction 1,2-di-(9Z,12Z-octadecadienoyl)-sn-glycero-3-phosphoethanolamine + S-adenosyl-L-methionine = 1,2-di-(9Z,12Z-octadecadienoyl)-sn-glycero-3-phospho-N-methylethanolamine + S-adenosyl-L-homocysteine + H(+). The enzyme catalyses 1,2-di-(9Z,12Z-octadecadienoyl)-sn-glycero-3-phospho-N-methylethanolamine + S-adenosyl-L-methionine = 1,2-di-(9Z,12Z-octadecadienoyl)-sn-glycero-3-phospho-N,N-dimethylethanolamine + S-adenosyl-L-homocysteine + H(+). It catalyses the reaction 1,2-di-(9Z,12Z-octadecadienoyl)-sn-glycero-3-phospho-N,N-dimethylethanolamine + S-adenosyl-L-methionine = 1,2-di-(9Z,12Z-octadecadienoyl)-sn-glycero-3-phosphocholine + S-adenosyl-L-homocysteine + H(+). The catalysed reaction is 1,2-di-(9Z,12Z,15Z-octadecatrienoyl)-sn-glycero-3-phosphoethanolamine + S-adenosyl-L-methionine = 1,2-di-(9Z,12Z,15Z-octadecatrienoyl)-sn-glycero-3-phospho-N-methylethanolamine + S-adenosyl-L-homocysteine + H(+). It carries out the reaction 1,2-di-(9Z,12Z,15Z-octadecatrienoyl)-sn-glycero-3-phospho-N-methylethanolamine + S-adenosyl-L-methionine = 1,2-di-(9Z,12Z,15Z-octadecatrienoyl)-sn-glycero-3-phospho-N,N-dimethylethanolamine + S-adenosyl-L-homocysteine + H(+). The enzyme catalyses 1,2-di-(9Z,12Z,15Z-octadecatrienoyl)-sn-glycero-3-phospho-N,N-dimethylethanolamine + S-adenosyl-L-methionine = 1,2-di-(9Z,12Z,15Z-octadecatrienoyl)-sn-glycero-3-phosphocholine + S-adenosyl-L-homocysteine + H(+). It catalyses the reaction 1-hexadecanoyl-2-(4Z,7Z,10Z,13Z,16Z,19Z-docosahexaenoyl)-sn-glycero-3-phosphoethanolamine + S-adenosyl-L-methionine = 1-hexadecanoyl-2-(4Z,7Z,10Z,13Z,16Z,19Z-docosahexaenoyl)-sn-glycero-3-phospho-N-methylethanolamine + S-adenosyl-L-homocysteine + H(+). The catalysed reaction is 1-hexadecanoyl-2-(4Z,7Z,10Z,13Z,16Z,19Z-docosahexaenoyl)-sn-glycero-3-phospho-N-methylethanolamine + S-adenosyl-L-methionine = 1-hexadecanoyl-2-(4Z,7Z,10Z,13Z,16Z,19Z-docosahexaenoyl)-sn-glycero-3-phospho-N,N-dimethylethanolamine + S-adenosyl-L-homocysteine + H(+). It carries out the reaction 1-hexadecanoyl-2-(4Z,7Z,10Z,13Z,16Z,19Z-docosahexaenoyl)-sn-glycero-3-phospho-N,N-dimethylethanolamine + S-adenosyl-L-methionine = 1-hexadecanoyl-2-(4Z,7Z,10Z,13Z,16Z,19Z-docosahexaenoyl)-sn-glycero-3-phosphocholine + S-adenosyl-L-homocysteine + H(+). It participates in phospholipid metabolism; phosphatidylcholine biosynthesis. Its activity is regulated as follows. The first methylation is rate-limiting. Its function is as follows. Catalyzes the three sequential steps of the methylation pathway for the biosynthesis of phosphatidylcholine, a critical and essential component for membrane structure. Uses S-adenosylmethionine (S-adenosyl-L-methionine, SAM or AdoMet) as the methyl group donor for the methylation of phosphatidylethanolamine (1,2-diacyl-sn-glycero-3-phosphoethanolamine, PE) to phosphatidylmonomethylethanolamine (1,2-diacyl-sn-glycero-3-phospho-N-methylethanolamine, PMME), PMME to phosphatidyldimethylethanolamine (1,2-diacyl-sn-glycero-3-phospho-N,N-dimethylethanolamine, PDME), and PDME to phosphatidylcholine (1,2-diacyl-sn-glycero-3-phosphocholine, PC), producing S-adenosyl-L-homocysteine in each step. Responsible for approximately 30% of hepatic PC with the CDP-choline pathway accounting for the other 70%. In terms of biological role, catalyzes the three sequential steps of the methylation of 1,2-diacyl-sn-glycero-3-phospho-N-methylethanolamine (PMME) to 1,2-diacyl-sn-glycero-3-phospho-N,N-dimethylethanolamine (PDME) more efficiently than isoform 2. Induces increase in PC species with longer polyunsaturated chains than isoform 2. Functionally, produces a higher increase in the level of PC species containing long chains with three double bonds than isoform 1. The chain is Phosphatidylethanolamine N-methyltransferase from Homo sapiens (Human).